We begin with the raw amino-acid sequence, 154 residues long: Endoribonuclease YbeY (154 aa).

Residues His114, His118, and His124 each contribute to the Zn(2+) site.

It belongs to the endoribonuclease YbeY family. The cofactor is Zn(2+).

Its subcellular location is the cytoplasm. Single strand-specific metallo-endoribonuclease involved in late-stage 70S ribosome quality control and in maturation of the 3' terminus of the 16S rRNA. In Marinomonas sp. (strain MWYL1), this protein is Endoribonuclease YbeY.